Here is a 442-residue protein sequence, read N- to C-terminus: C4-dicarboxylate transport protein (442 aa).

The next 9 membrane-spanning stretches (helical) occupy residues 13–33, 49–69, 81–101, 149–169, 193–213, 227–247, 312–332, 336–356, and 357–377; these read VLYFQVLTAVVIGVLLGHFYP, GIKMLIAPIIFCTVVLGIAGM, LALLYFEIVSTIALMVGLVVV, AFAKGEILQVLFIAILFGFAL, MIAIIMKFAPIGAFGAMAFTI, LMGSFYLTCLLFVFIVLGIIA, IYLTMAAVFIAQATNTPMTLL, TLLAVLLLTSKGAAGVTGSGF, and IVLAATLSAVGDVPVAGLAII.

Belongs to the dicarboxylate/amino acid:cation symporter (DAACS) (TC 2.A.23) family.

The protein localises to the cell membrane. Responsible for the transport of dicarboxylates such as succinate, fumarate, and malate across the membrane. This is C4-dicarboxylate transport protein from Polynucleobacter asymbioticus (strain DSM 18221 / CIP 109841 / QLW-P1DMWA-1) (Polynucleobacter necessarius subsp. asymbioticus).